Reading from the N-terminus, the 85-residue chain is ATP synthase subunit c (85 aa).

Helical transmembrane passes span 10-30 and 53-73; these read IAVA…FGLL and FIVA…ALFF.

The protein belongs to the ATPase C chain family. As to quaternary structure, F-type ATPases have 2 components, F(1) - the catalytic core - and F(0) - the membrane proton channel. F(1) has five subunits: alpha(3), beta(3), gamma(1), delta(1), epsilon(1). F(0) has three main subunits: a(1), b(2) and c(10-14). The alpha and beta chains form an alternating ring which encloses part of the gamma chain. F(1) is attached to F(0) by a central stalk formed by the gamma and epsilon chains, while a peripheral stalk is formed by the delta and b chains.

The protein localises to the cell inner membrane. In terms of biological role, f(1)F(0) ATP synthase produces ATP from ADP in the presence of a proton or sodium gradient. F-type ATPases consist of two structural domains, F(1) containing the extramembraneous catalytic core and F(0) containing the membrane proton channel, linked together by a central stalk and a peripheral stalk. During catalysis, ATP synthesis in the catalytic domain of F(1) is coupled via a rotary mechanism of the central stalk subunits to proton translocation. Key component of the F(0) channel; it plays a direct role in translocation across the membrane. A homomeric c-ring of between 10-14 subunits forms the central stalk rotor element with the F(1) delta and epsilon subunits. The protein is ATP synthase subunit c of Pseudomonas syringae pv. syringae (strain B728a).